We begin with the raw amino-acid sequence, 474 residues long: Glycogen synthase (474 aa).

Lys12 contributes to the ADP-alpha-D-glucose binding site.

This sequence belongs to the glycosyltransferase 1 family. Bacterial/plant glycogen synthase subfamily.

The catalysed reaction is [(1-&gt;4)-alpha-D-glucosyl](n) + ADP-alpha-D-glucose = [(1-&gt;4)-alpha-D-glucosyl](n+1) + ADP + H(+). Its pathway is glycan biosynthesis; glycogen biosynthesis. In terms of biological role, synthesizes alpha-1,4-glucan chains using ADP-glucose. In Xanthomonas axonopodis pv. citri (strain 306), this protein is Glycogen synthase.